The primary structure comprises 149 residues: Protein-export protein SecB (149 aa).

Belongs to the SecB family. As to quaternary structure, homotetramer, a dimer of dimers. One homotetramer interacts with 1 SecA dimer.

It localises to the cytoplasm. Functionally, one of the proteins required for the normal export of preproteins out of the cell cytoplasm. It is a molecular chaperone that binds to a subset of precursor proteins, maintaining them in a translocation-competent state. It also specifically binds to its receptor SecA. This is Protein-export protein SecB from Acidithiobacillus ferrooxidans (strain ATCC 23270 / DSM 14882 / CIP 104768 / NCIMB 8455) (Ferrobacillus ferrooxidans (strain ATCC 23270)).